The primary structure comprises 742 residues: Phosphoribosylformylglycinamidine synthase subunit PurL (742 aa).

Residue H54 is part of the active site. Y57 and K96 together coordinate ATP. Residue E98 participates in Mg(2+) binding. Residues S99–H102 and R121 each bind substrate. Catalysis depends on H100, which acts as the Proton acceptor. D122 serves as a coordination point for Mg(2+). A substrate-binding site is contributed by Q245. D273 contributes to the Mg(2+) binding site. A substrate-binding site is contributed by E317 to Q319. ATP contacts are provided by D500 and G537. N538 provides a ligand contact to Mg(2+). S540 contributes to the substrate binding site.

It belongs to the FGAMS family. In terms of assembly, monomer. Part of the FGAM synthase complex composed of 1 PurL, 1 PurQ and 2 PurS subunits.

It is found in the cytoplasm. It catalyses the reaction N(2)-formyl-N(1)-(5-phospho-beta-D-ribosyl)glycinamide + L-glutamine + ATP + H2O = 2-formamido-N(1)-(5-O-phospho-beta-D-ribosyl)acetamidine + L-glutamate + ADP + phosphate + H(+). The protein operates within purine metabolism; IMP biosynthesis via de novo pathway; 5-amino-1-(5-phospho-D-ribosyl)imidazole from N(2)-formyl-N(1)-(5-phospho-D-ribosyl)glycinamide: step 1/2. Functionally, part of the phosphoribosylformylglycinamidine synthase complex involved in the purines biosynthetic pathway. Catalyzes the ATP-dependent conversion of formylglycinamide ribonucleotide (FGAR) and glutamine to yield formylglycinamidine ribonucleotide (FGAM) and glutamate. The FGAM synthase complex is composed of three subunits. PurQ produces an ammonia molecule by converting glutamine to glutamate. PurL transfers the ammonia molecule to FGAR to form FGAM in an ATP-dependent manner. PurS interacts with PurQ and PurL and is thought to assist in the transfer of the ammonia molecule from PurQ to PurL. This Geobacillus kaustophilus (strain HTA426) protein is Phosphoribosylformylglycinamidine synthase subunit PurL.